The following is a 378-amino-acid chain: Succinyl-diaminopimelate desuccinylase (378 aa).

Residue H68 participates in Zn(2+) binding. D70 is an active-site residue. Zn(2+) is bound at residue D101. E135 serves as the catalytic Proton acceptor. Zn(2+)-binding residues include E136, E164, and H350.

Belongs to the peptidase M20A family. DapE subfamily. Homodimer. Zn(2+) serves as cofactor. The cofactor is Co(2+).

The catalysed reaction is N-succinyl-(2S,6S)-2,6-diaminopimelate + H2O = (2S,6S)-2,6-diaminopimelate + succinate. It functions in the pathway amino-acid biosynthesis; L-lysine biosynthesis via DAP pathway; LL-2,6-diaminopimelate from (S)-tetrahydrodipicolinate (succinylase route): step 3/3. Its function is as follows. Catalyzes the hydrolysis of N-succinyl-L,L-diaminopimelic acid (SDAP), forming succinate and LL-2,6-diaminopimelate (DAP), an intermediate involved in the bacterial biosynthesis of lysine and meso-diaminopimelic acid, an essential component of bacterial cell walls. The polypeptide is Succinyl-diaminopimelate desuccinylase (Vibrio parahaemolyticus serotype O3:K6 (strain RIMD 2210633)).